A 95-amino-acid chain; its full sequence is Phosphoribosyl-ATP pyrophosphatase (95 aa).

The protein belongs to the PRA-PH family.

It is found in the cytoplasm. It carries out the reaction 1-(5-phospho-beta-D-ribosyl)-ATP + H2O = 1-(5-phospho-beta-D-ribosyl)-5'-AMP + diphosphate + H(+). Its pathway is amino-acid biosynthesis; L-histidine biosynthesis; L-histidine from 5-phospho-alpha-D-ribose 1-diphosphate: step 2/9. The protein is Phosphoribosyl-ATP pyrophosphatase of Methanocella arvoryzae (strain DSM 22066 / NBRC 105507 / MRE50).